The primary structure comprises 469 residues: Glutamate--tRNA ligase (469 aa).

A 'HIGH' region motif is present at residues 9–19 (PSPTGYLHVGG). Zn(2+)-binding residues include Cys-98, Cys-100, Cys-125, and Asp-127. A 'KMSKS' region motif is present at residues 237–241 (KLSKR). ATP is bound at residue Lys-240.

This sequence belongs to the class-I aminoacyl-tRNA synthetase family. Glutamate--tRNA ligase type 1 subfamily. Monomer. Zn(2+) is required as a cofactor.

The protein localises to the cytoplasm. The enzyme catalyses tRNA(Glu) + L-glutamate + ATP = L-glutamyl-tRNA(Glu) + AMP + diphosphate. Functionally, catalyzes the attachment of glutamate to tRNA(Glu) in a two-step reaction: glutamate is first activated by ATP to form Glu-AMP and then transferred to the acceptor end of tRNA(Glu). This Serratia proteamaculans (strain 568) protein is Glutamate--tRNA ligase.